Here is a 1128-residue protein sequence, read N- to C-terminus: Nck-associated protein 1 (1128 aa).

Ser-2 carries the post-translational modification N-acetylserine. The disordered stretch occupies residues 640-665 (AVNKKSKKQTGKKGEPEREKPGVESM). The segment covering 651-665 (KKGEPEREKPGVESM) has biased composition (basic and acidic residues). The helical transmembrane segment at 995 to 1015 (IACLLMVFVAVSLPTLASNVM) threads the bilayer.

The protein belongs to the HEM-1/HEM-2 family. As to quaternary structure, component of the WAVE1 complex composed of ABI2, CYFIP1 or CYFIP2, BRK1, NCKAP1 and WASF1/WAVE1. Within the complex, a heterodimer containing NCKAP1 and CYFIP1 interacts with a heterotrimer formed by WAVE1, ABI2 and BRK1. Component of the WAVE2 complex composed of ABI1, CYFIP1/SRA1, NCKAP1/NAP1 and WASF2/WAVE2. CYFIP2 binds to activated RAC1 which causes the complex to dissociate, releasing activated WASF1. The complex can also be activated by NCK1. Associates preferentially with the first SH3 domain of NCK. Interacts with NYAP1, NYAP2 and MYO16. Interacts with TMEM132D. In terms of assembly, (Microbial infection) Interacts with human cytomegalovirus protein UL135. In terms of tissue distribution, expressed in all tissues examined except peripheral blood leukocytes, with highest expression in brain, heart, and skeletal muscle. Expressed in cells of various brain regions including Purkinje cells and dentate nucleus of the cerebellum, CA4 region and dentate gyrus of the hippocampus, and in frontal gray and white matter.

The protein resides in the cell membrane. It is found in the cell projection. It localises to the lamellipodium membrane. Part of the WAVE complex that regulates lamellipodia formation. The WAVE complex regulates actin filament reorganization via its interaction with the Arp2/3 complex. Actin remodeling activity is regulated by RAC1. As component of the WAVE1 complex, required for BDNF-NTRK2 endocytic trafficking and signaling from early endosomes. The polypeptide is Nck-associated protein 1 (NCKAP1) (Homo sapiens (Human)).